We begin with the raw amino-acid sequence, 568 residues long: Probable inactive 1-aminocyclopropane-1-carboxylate synthase-like protein 2 (568 aa).

The disordered stretch occupies residues M1–R21. At K395 the chain carries N6-(pyridoxal phosphate)lysine.

Belongs to the class-I pyridoxal-phosphate-dependent aminotransferase family.

This Homo sapiens (Human) protein is Probable inactive 1-aminocyclopropane-1-carboxylate synthase-like protein 2 (ACCSL).